The chain runs to 61 residues: Large ribosomal subunit protein eL29y (61 aa).

Residues 1–61 form a disordered region; that stretch reads MAKSKNHTAH…KSGENAGVEE (61 aa). Over residues 15-31 the composition is skewed to basic residues; the sequence is KAHKNGIKKPRRHRHTP.

The protein belongs to the eukaryotic ribosomal protein eL29 family.

This chain is Large ribosomal subunit protein eL29y (RPL29B), found in Arabidopsis thaliana (Mouse-ear cress).